Here is a 328-residue protein sequence, read N- to C-terminus: 4-hydroxythreonine-4-phosphate dehydrogenase (328 aa).

Substrate is bound by residues His-134 and Thr-135. 3 residues coordinate a divalent metal cation: His-164, His-209, and His-265. 3 residues coordinate substrate: Lys-273, Asn-282, and Arg-291.

Belongs to the PdxA family. As to quaternary structure, homodimer. It depends on Zn(2+) as a cofactor. Mg(2+) serves as cofactor. Co(2+) is required as a cofactor.

The protein resides in the cytoplasm. It carries out the reaction 4-(phosphooxy)-L-threonine + NAD(+) = 3-amino-2-oxopropyl phosphate + CO2 + NADH. The protein operates within cofactor biosynthesis; pyridoxine 5'-phosphate biosynthesis; pyridoxine 5'-phosphate from D-erythrose 4-phosphate: step 4/5. Its function is as follows. Catalyzes the NAD(P)-dependent oxidation of 4-(phosphooxy)-L-threonine (HTP) into 2-amino-3-oxo-4-(phosphooxy)butyric acid which spontaneously decarboxylates to form 3-amino-2-oxopropyl phosphate (AHAP). In Vibrio vulnificus (strain YJ016), this protein is 4-hydroxythreonine-4-phosphate dehydrogenase.